The primary structure comprises 277 residues: Carbonyl reductase [NADPH] 1 (277 aa).

Ser2 carries the post-translational modification N-acetylserine. Residues Ser2 and Ser30 each carry the phosphoserine modification. NADP(+) contacts are provided by residues 10–34 (VTGG…GDVV), 63–64 (DI), and Asn90. Glutathione is bound by residues 95 to 97 (FKV) and Gln106. Ser140 lines the substrate pocket. 193-194 (AY) serves as a coordination point for glutathione. Catalysis depends on Tyr194, which acts as the Proton acceptor. NADP(+) contacts are provided by residues 194–198 (YGVTK) and 231–233 (VRT). Lys239 is subject to N6-1-carboxyethyl lysine.

This sequence belongs to the short-chain dehydrogenases/reductases (SDR) family. As to quaternary structure, monomer. In terms of tissue distribution, expressed in kidney (at protein level).

The protein localises to the cytoplasm. The enzyme catalyses a secondary alcohol + NADP(+) = a ketone + NADPH + H(+). It carries out the reaction a primary alcohol + NADP(+) = an aldehyde + NADPH + H(+). The catalysed reaction is prostaglandin F2alpha + NADP(+) = prostaglandin E2 + NADPH + H(+). It catalyses the reaction prostaglandin E1 + NADP(+) = 15-oxoprostaglandin E1 + NADPH + H(+). The enzyme catalyses menadione + NADPH + H(+) = menadiol + NADP(+). It carries out the reaction prostaglandin D2 + NADP(+) = 15-oxoprostaglandin D2 + NADPH + H(+). The catalysed reaction is prostaglandin E2 + NADP(+) = 15-oxoprostaglandin E2 + NADPH + H(+). It catalyses the reaction prostaglandin F2alpha + NADP(+) = 15-oxoprostaglandin F2alpha + NADPH + H(+). The enzyme catalyses daunorubicin + NADPH + H(+) = 13-dihydrodaunorubicin + NADP(+). It carries out the reaction S-nitrosoglutathione + NADPH + H(+) = S-(hydroxysulfenamide)glutathione + NADP(+). The catalysed reaction is cortisol + NADPH + H(+) = 20beta-dihydrocortisol + NADP(+). It catalyses the reaction corticosterone + NADPH + H(+) = 20beta-dihydrocorticosterone + NADP(+). Its activity is regulated as follows. Inhibited by quercetin, rutenin and its derivatives. In terms of biological role, NADPH-dependent reductase with broad substrate specificity. Catalyzes the reduction of a wide variety of carbonyl compounds including quinones, prostaglandins, menadione, plus various xenobiotics. Catalyzes the reduction of the antitumor anthracyclines doxorubicin and daunorubicin to the cardiotoxic compounds doxorubicinol and daunorubicinol. Can convert prostaglandin E to prostaglandin F2-alpha. Can bind glutathione, which explains its higher affinity for glutathione-conjugated substrates. Catalyzes the reduction of S-nitrosoglutathione. In addition, participates in the glucocorticoid metabolism by catalyzing the NADPH-dependent cortisol/corticosterone into 20beta-dihydrocortisol (20b-DHF) or 20beta-corticosterone (20b-DHB), which are weak agonists of NR3C1 and NR3C2 in adipose tissue. The polypeptide is Carbonyl reductase [NADPH] 1 (Homo sapiens (Human)).